Consider the following 503-residue polypeptide: Alpha-1-syntrophin (503 aa).

PH domains lie at 6-263 (RAPR…AQIG) and 287-399 (DIKQ…DGCH). The disordered stretch occupies residues 40–68 (LTVSPADGEPGPEPEPAQLNGAAEPGAAP). One can recognise a PDZ domain in the interval 81–164 (RVTVRKADAG…EVVLEVKYMK (84 aa)). Residues serine 95, serine 178, serine 183, serine 187, and serine 194 each carry the phosphoserine modification. The disordered stretch occupies residues 177 to 203 (TSVGWDSPPASPLQRQPSSPGPQPRNL). An SU domain is found at 447–503 (PFEKLQMSSDDGTSLLFLDFGGAEGEIQLDLHSCPKTMVFIIHSFLSAKVTRLGLLA). The calmodulin-binding stretch occupies residues 481 to 503 (PKTMVFIIHSFLSAKVTRLGLLA).

This sequence belongs to the syntrophin family. As to quaternary structure, monomer and homodimer. Interacts with MAPK12, TGFA, GA and F-actin. Interacts with the other members of the syntrophin family: SNTB1 and SNTB2; with dystrophin protein DMD and related proteins DTNA and UTRN; SGCG and SGCA of the dystrophin glycoprotein complex; NOS1; GRB2; calmodulin and the sodium channel proteins SCN4A and SCN5A. Interacts with MYOC; regulates muscle hypertrophy. Interacts with DTNB. Post-translationally, phosphorylated by CaM-kinase II. Phosphorylation may inhibit the interaction with DMD. In terms of tissue distribution, high expression in skeletal muscle. Expressed at intermediate level in heart, kidney and brain, and at low level in intestine, liver, lung and testis.

The protein resides in the cell membrane. The protein localises to the sarcolemma. Its subcellular location is the cell junction. It localises to the cytoplasm. It is found in the cytoskeleton. Its function is as follows. Adapter protein that binds to and probably organizes the subcellular localization of a variety of membrane proteins. May link various receptors to the actin cytoskeleton and the extracellular matrix via the dystrophin glycoprotein complex. Plays an important role in synapse formation and in the organization of UTRN and acetylcholine receptors at the neuromuscular synapse. Binds to phosphatidylinositol 4,5-bisphosphate. The chain is Alpha-1-syntrophin (Snta1) from Mus musculus (Mouse).